We begin with the raw amino-acid sequence, 251 residues long: Triosephosphate isomerase (251 aa).

Substrate contacts are provided by Asn10 and Lys12. The Electrophile role is filled by His96. Glu168 serves as the catalytic Proton acceptor.

It belongs to the triosephosphate isomerase family. Homodimer.

The catalysed reaction is D-glyceraldehyde 3-phosphate = dihydroxyacetone phosphate. It participates in carbohydrate biosynthesis; gluconeogenesis. It functions in the pathway carbohydrate degradation; glycolysis; D-glyceraldehyde 3-phosphate from glycerone phosphate: step 1/1. The sequence is that of Triosephosphate isomerase (tpiA) from Aspergillus oryzae (strain ATCC 42149 / RIB 40) (Yellow koji mold).